A 60-amino-acid polypeptide reads, in one-letter code: MDPCECSKTGTCNCGGSCTCKNCSCTTCNKSCCPCCPSGCPKCASGCVCKGKTCDTSCCQ.

An N-acetylmethionine modification is found at methionine 1. Positions 1-28 (MDPCECSKTGTCNCGGSCTCKNCSCTTC) are beta. 20 residues coordinate a divalent metal cation: cysteine 4, cysteine 6, cysteine 12, cysteine 14, cysteine 18, cysteine 20, cysteine 23, cysteine 25, cysteine 28, cysteine 32, cysteine 33, cysteine 35, cysteine 36, cysteine 40, cysteine 43, cysteine 47, cysteine 49, cysteine 54, cysteine 58, and cysteine 59. The segment at 29–60 (NKSCCPCCPSGCPKCASGCVCKGKTCDTSCCQ) is alpha.

It belongs to the metallothionein superfamily. Type 1 family.

Its function is as follows. Metallothioneins have a high content of cysteine residues that bind various heavy metals. In Pleuronectes platessa (European plaice), this protein is Metallothionein (mt).